The chain runs to 248 residues: uncharacterized protein (248 aa).

9–33 (IITGASSGIGEATAILLAEKGAKLV) is an NADP(+) binding site. Ser-141 serves as a coordination point for substrate. Tyr-154 acts as the Proton acceptor in catalysis.

Belongs to the short-chain dehydrogenases/reductases (SDR) family.

This is an uncharacterized protein from Listeria innocua serovar 6a (strain ATCC BAA-680 / CLIP 11262).